A 366-amino-acid chain; its full sequence is Putative transcription factor PHD1 (366 aa).

Residues 186 to 292 form the HTH APSES-type domain; that stretch reads RVITTMWEDE…KDIESIVDAR (107 aa). A DNA-binding region (H-T-H motif) is located at residues 220 to 241; it reads GTKLLNVTKMTRGRRDGILRSE. The segment at 294-366 is disordered; it reads PSNKASLTPK…QTSRAKNELS (73 aa). Positions 312–328 are enriched in basic and acidic residues; it reads EPSDNKHEIATEIKPKS.

Belongs to the EFG1/PHD1/stuA family.

It is found in the nucleus. Functionally, putative transcription factor that functions in pseudohyphal growth. The sequence is that of Putative transcription factor PHD1 (PHD1) from Saccharomyces cerevisiae (strain ATCC 204508 / S288c) (Baker's yeast).